The sequence spans 874 residues: Breast cancer anti-estrogen resistance protein 1 (874 aa).

Methionine 1 bears the N-acetylmethionine mark. An SH3 domain is found at 3 to 65; sequence VPNVLAKALY…PGNRLKILVG (63 aa). The interval 71-177 is disordered; sequence PVGPGPGPPA…LYQVPPGPGS (107 aa). Positions 73–88 are enriched in pro residues; it reads GPGPGPPATPPQPQPS. The interval 119–420 is substrate for kinases; the sequence is YLVPTPSKTQ…DGVYAVPPPA (302 aa). At tyrosine 132 the chain carries Phosphotyrosine. The segment covering 139 to 155 has biased composition (polar residues); sequence PQFQSPPAKQTSTFSKQ. Serine 143 carries the post-translational modification Phosphoserine. Phosphotyrosine occurs at positions 238 and 253. A Phosphothreonine modification is found at threonine 273. Serine 296 bears the Phosphoserine mark. Residues tyrosine 366, tyrosine 376, and tyrosine 414 each carry the phosphotyrosine modification. Positions 374-388 are enriched in low complexity; that stretch reads DLYDVPPGLRRPGPG. Disordered stretches follow at residues 374–394, 409–450, and 610–662; these read DLYDVPPGLRRPGPGTLYDVP, VDDG…SLEV, and RRTK…NSEG. Over residues 420 to 430 the composition is skewed to basic and acidic residues; sequence AEREAPTDGKR. A compositionally biased stretch (low complexity) spans 431-448; sequence LSASSTGSTRSSQSASSL. Phosphoserine is present on residues serine 432, serine 441, and serine 643. The segment covering 621–659 has biased composition (polar residues); the sequence is GSSSLHPNPTDKASSIQSRPLPSPPKFTSQDSPDGQYEN. The SH3-binding signature appears at 639–647; the sequence is RPLPSPPKF. Residues 750–800 are divergent helix-loop-helix motif; the sequence is FYLEQCEANLTTLTDAVDAFFTAVATNQPPKIFVAHSKFVILSAHKLVFIG.

Belongs to the CAS family. Forms complexes in vivo with PTK2/FAK1, adapter protein CRKL and LYN kinase. Can heterodimerize with NEDD9. Component of a complex comprised of SH2D3C, BCAR1/CAS, and CRK. Within the complex, interacts with SH2D3C (via C-terminus), and CRK. Part of a complex comprised of PTPRA, BCAR1, BCAR3 (via SH2 domain) and SRC; the formation of the complex is dependent on integrin mediated-tyrosine phosphorylation of PTPRA. Interacts with BCAR3 (via Ras-GEF domain); the interaction regulates adhesion-dependent serine phosphorylation. Interacts with SMAD2 and SMAD3. Interacts with NPHP1. Interacts with PTK2B/PYK2. Interacts (via C-terminus) with SH2D3C/CHAT isoform 2 (via C-terminus). Interacts with activated CSPG4. Interacts with BMX, INPPL1/SHIP2 and PEAK1. Part of a collagen stimulated complex involved in cell migration composed of CDC42, CRK, TNK2 and BCAR1/p130cas. Interacts with TNK2 via SH3 domains. Interacts (when tyrosine-phosphorylated) with tensin TNS1; the interaction is increased by phosphorylation of TNS1. Post-translationally, PTK2/FAK1 activation mediates phosphorylation at the YDYVHL motif; phosphorylation is most likely catalyzed by SRC family members. SRC-family kinases are recruited to the phosphorylated sites and can phosphorylate other tyrosine residues. Tyrosine phosphorylation is triggered by integrin mediated adhesion of cells to the extracellular matrix. In terms of processing, dephosphorylated by PTPN14 at Tyr-132. Phosphorylated by SRC kinase in a EDN1- and PTK2B-mediated manner; phosphorylation strengthens its interaction with BCAR3 as part of the PTK2B/BCAR1/BCAR3/RAP1 signaling pathway. In terms of tissue distribution, expressed in olfactory sensory neurons (at protein level). Expressed abundantly in the liver, lung, brain, and at lower levels in the heart (at protein level).

It is found in the cell junction. Its subcellular location is the focal adhesion. The protein localises to the cytoplasm. The protein resides in the cell projection. It localises to the axon. Docking protein which plays a central coordinating role for tyrosine kinase-based signaling related to cell adhesion. Implicated in induction of cell migration and cell branching. Involved in the BCAR3-mediated inhibition of TGFB signaling. The protein is Breast cancer anti-estrogen resistance protein 1 (Bcar1) of Mus musculus (Mouse).